A 358-amino-acid chain; its full sequence is Bi-functional coumaroyl CoA and feruloyl CoA ortho-hydroxylase F6H2-1-1 (358 aa).

The 102-residue stretch at 207–308 (GSRRININYY…RISVPVFVNP (102 aa)) folds into the Fe2OG dioxygenase domain. Residue Y216 coordinates 2-oxoglutarate. 3 residues coordinate Fe cation: H231, D233, and H289. The 2-oxoglutarate site is built by R299 and S301.

It belongs to the iron/ascorbate-dependent oxidoreductase family. It depends on L-ascorbate as a cofactor. Requires Fe(2+) as cofactor. In terms of tissue distribution, mostly expressed in underground stems and stems, and, at low levels, in tubers, leaves and petioles.

It carries out the reaction (E)-4-coumaroyl-CoA + 2-oxoglutarate + O2 = (E)-2,4-dihydroxycinnamoyl-CoA + succinate + CO2. The enzyme catalyses (E)-feruloyl-CoA + 2-oxoglutarate + O2 = (E)-6-hydroxyferuloyl-CoA + succinate + CO2. Its pathway is phenylpropanoid metabolism. In terms of biological role, 2-oxoglutarate (OG)- and Fe(II)-dependent dioxygenase (2OGD) involved in scopoletin and umbelliferone biosynthesis. Converts feruloyl CoA into 6'-hydroxyferuloyl CoA, and p-coumaroyl CoA into 2,4-dihydroxycinnamoyl-CoA, but has no activity with caffeoyl-CoA. This Ipomoea batatas (Sweet potato) protein is Bi-functional coumaroyl CoA and feruloyl CoA ortho-hydroxylase F6H2-1-1.